Consider the following 422-residue polypeptide: G-protein coupled receptor 83 (422 aa).

An N-terminal signal peptide occupies residues Met1–Ala16. Residues Ala17–Lys70 lie on the Extracellular side of the membrane. N-linked (GlcNAc...) asparagine glycans are attached at residues Asn37 and Asn45. Residues Ala71 to Val91 traverse the membrane as a helical segment. Topologically, residues Cys92–Ser106 are cytoplasmic. A helical membrane pass occupies residues Leu107–Leu128. Residues Val129 to His144 lie on the Extracellular side of the membrane. Asn133 is a glycosylation site (N-linked (GlcNAc...) asparagine). A helical membrane pass occupies residues Val145–Val166. The Cytoplasmic portion of the chain corresponds to Asp167 to Gly185. Residues Val186–Gln207 form a helical membrane-spanning segment. The Extracellular portion of the chain corresponds to Lys208–Tyr237. A helical transmembrane segment spans residues Leu238–Ala259. The Cytoplasmic segment spans residues Arg260 to Met292. The helical transmembrane segment at Leu293 to Leu314 threads the bilayer. Residues Ser315 to Tyr326 are Extracellular-facing. The chain crosses the membrane as a helical span at residues Phe327–Leu347. At Asn348–Ser422 the chain is on the cytoplasmic side.

This sequence belongs to the G-protein coupled receptor 1 family.

It is found in the cell membrane. Functionally, G-protein coupled receptor for PEN, a neuropeptide produced from the precursor protein, proSAAS (encoded by PCSK1N). Acts through a G(i)- and G(q)-alpha-alpha-mediated pathway in response to PEN. Plays a role in food intake and body weight regulation. May contribute to the regulation of anxiety-related behaviors. This chain is G-protein coupled receptor 83 (GPR83), found in Canis lupus familiaris (Dog).